The primary structure comprises 571 residues: Zinc metalloproteinase-disintegrin-like jararhagin (571 aa).

Residues 1 to 150 constitute a propeptide that is removed on maturation; sequence ATRPKGAVQP…KKASQLAFTA (150 aa). At Glu151 the chain carries Pyrrolidone carboxylic acid (Glu). In terms of domain architecture, Peptidase M12B spans 159-355; it reads KYIEFFVVVD…HNPECIINEP (197 aa). Ca(2+) is bound by residues Glu162 and Asp246. 3 cysteine pairs are disulfide-bonded: Cys270-Cys350, Cys310-Cys334, and Cys312-Cys317. His295 contributes to the Zn(2+) binding site. Glu296 is a catalytic residue. His299 and His305 together coordinate Zn(2+). N-linked (GlcNAc...) asparagine glycosylation occurs at Asn333. 8 residues coordinate Ca(2+): Cys350, Asn353, Val365, Asn368, Leu370, Glu372, Glu375, and Asp378. One can recognise a Disintegrin domain in the interval 363–449; it reads PPVCGNELLE…ECPADVFHKN (87 aa). 22 disulfides stabilise this stretch: Cys366–Cys385, Cys366–Cys395, Cys377–Cys390, Cys377–Cys395, Cys379–Cys385, Cys389–Cys412, Cys403–Cys409, Cys408–Cys434, Cys421–Cys441, Cys428–Cys453, Cys428–Cys460, Cys453–Cys465, Cys460–Cys465, Cys472–Cys487, Cys472–Cys522, Cys487–Cys533, Cys500–Cys510, Cys510–Cys517, Cys517–Cys559, Cys522–Cys533, Cys553–Cys564, and Cys559–Cys564. A D/ECD-tripeptide motif is present at residues 427–429; it reads ECD. Positions 429, 430, 432, 444, and 445 each coordinate Ca(2+).

The protein belongs to the venom metalloproteinase (M12B) family. P-III subfamily. P-IIIb sub-subfamily. Monomer (Jararhagin and Jararhagin-C) and dimer (Jaracetin). The cofactor is Zn(2+). In terms of processing, the N-terminus of Jararhagin is blocked. Expressed by the venom gland.

The protein resides in the secreted. The catalysed reaction is Cleavage of 10-His-|-Leu-11, 14-Ala-|-Leu-15, 16-Tyr-|-Leu-17 and 24-Phe-|-Phe-25 bonds in insulin B chain.. Inhibited by EDTA, 1,10 phenanthroline and batimastat (a peptidomimetic MMP inhibitor). In terms of biological role, snake venom zinc metalloproteinase-disintegrin-like jararhagin: causes hemorrhage. This is the result of the degradation of sub-endothelial matrix proteins leading to the disruption of the blood vessel endothelium, with accompanying disturbances in platelet function. It is able to degrade von Willebrand factor (vWF) and it hydrolyzes the alpha-chain of fibrinogen (FGA) while leaving the beta and gamma chains unaffected. It inhibits collagen-induced platelet aggregation through the binding to alpha-2/beta-1 integrin (ITGA2/ITGB1) (collagen receptor), and it cleaves the beta-1 subunit of the same integrin, inhibiting platelet interaction and ultimately causing impairment of signal transduction. It has inability to be affected by the plasma inhibitor alpha(2)-macroglobulin. In fibroblasts, it functions as a collagen-mimetic substrate and, in endothelial cells, it causes apoptosis and indirectly inhibits cell proliferation by release of angiostatin-like compounds. It induces a strong pro-inflammatory response characterized by intense leukocyte accumulation and release of cytokines at the site of the injection. Although hemorrhage and edema are a response to the direct effect of this toxin, jararhagin-induced inflammation and necrosis are dependent on macrophages and key pro-inflammatory cytokines or their receptors. It also possesses anti-tumorgenic properties. The monomeric form inhibits collagen- and ADP-induced platelet aggregation, but has no effect on glycoprotein Ib-IX-dependent (GP1BA/GP5/GP9) platelet agglutination. Locally activates the early events of an acute inflammatory response as leukocyte rolling and pro-inflammatory cytokine release. Its function is as follows. The dimeric form jaracetin may be a dimeric form of jararhagin-C. It binds to von Willebrand factor (VWF) and induces its interaction with GPIbalpha (GP1BA) (via the vWF A1 domain), resulting in platelet aggregation. Also binds the alpha-2 subunit of the alpha-2/beta-1 (ITGA2/ITGB1) integrin. It potently induces platelet aggregation in citrated platelet-rich plasma. The sequence is that of Zinc metalloproteinase-disintegrin-like jararhagin from Bothrops jararaca (Jararaca).